The chain runs to 1175 residues: MEMEEISENLTASHSIKLTNMWLELLKSVFLSTPQDLPEIILILSLICTVGAFLNMHLKDFPIPLPVILFLIGCCFEILSFASTQIQIYADAIQWMDPDIFFGIFTPVIIFNVAFDMDIYMLQKLFWQILVITIPGFLINYTLILWYLQSVNKLSLKTVPWLLFSAVLISSDPMLTSASIRDLGLSRSLTNLINGESLLTSVLSLVIYSGVVHIRFKSKSVNHTLAHKVMSTAWSYIVESFITGIVFTKVIQLWMATIFGDDVNHITLIFSVLYLIFYVCELVGMSGIFTLATIGLFLNSTSFKPGVEAFLLEFWNCLSFIGFLMVFTFIGLLIPAHTYLHISFSDVYYSLNIYFTLIVLRLLVFLLMSPILSRLGHGFSWRWAFIMVWSEMKGTPNINMALLLAYSDISLGSERERSQILFHGVSVCVITLIVNRFILPMAVTKLGLRDVTSTKYKSVYYTFQHFQELTKSTAMALKFDKDLANADWNMVDNAIILQNPYAMNQEEITEHQKVKCPDCNKEIDETLNIEAMELTNRRLLSAQIASYQRQYRNEVLSQSAVQVLVGAAGSFGEKKGEYMSPENIKNFSESKKLLSFLRKLLLNWVYNTKKDKGVPSRYMFLHACHRIVFTNEFEYTGYLVVLMSTYPMIICWISRLKDIYDNEIKCANYYFLAFYILEALLKVAAMRKEFFSHTWLLFELGITLVGVLDIILIETDSISYNFDLTETVVFMNVIRLLRILRILKLVTPKLLQIIDKRMSQQISFRYSILKGYVQGEMDVLNIIDQIASSKQTKQILLKRVMRNMEHAMKELGYLEYDHPEIAVTMKTKEEINVMLNMAREIVKAFRSKGIIHKVEGTEINKLIMAKKIQVLDLQSVIQPFNVEEAPCNIPWLSEDPEAITFIQEKAKVVTFDCGNNIFEEGDEPEGIYVIISGMVKLKRSKPHLEMERVSAESEIKIHPLPHTEYLLSGEIIGELNCLTKERMQYSATCKTVVETYFIPISHLYEGFEKRCPNMKHKMWQKIGLAITAQKIREHLSFEDWNYKLQLKLCNAFIRDIPKSMKTDIYDETVTHVVLIHGSAEDCQLRKIYKAPFLIPVTCHQIQGMEDFTKVMIIQTSIAVRKFRWNVRKYIPPRRISMKPDSERESFETLDETSEEDNGKKENQENEELIEENINI.

Over 1–39 (MEMEEISENLTASHSIKLTNMWLELLKSVFLSTPQDLPE) the chain is Extracellular. The helical transmembrane segment at 40–59 (IILILSLICTVGAFLNMHLK) threads the bilayer. Residues 60-64 (DFPIP) are Cytoplasmic-facing. The helical transmembrane segment at 65 to 82 (LPVILFLIGCCFEILSFA) threads the bilayer. Over 83-98 (STQIQIYADAIQWMDP) the chain is Extracellular. The chain crosses the membrane as a helical span at residues 99-115 (DIFFGIFTPVIIFNVAF). At 116–125 (DMDIYMLQKL) the chain is on the cytoplasmic side. A helical membrane pass occupies residues 126–151 (FWQILVITIPGFLINYTLILWYLQSV). Residues 126-213 (FWQILVITIP…SLVIYSGVVH (88 aa)) are transport core domain. The Extracellular segment spans residues 152 to 157 (NKLSLK). A helical membrane pass occupies residues 158-183 (TVPWLLFSAVLISSDPMLTSASIRDL). Over 184-186 (GLS) the chain is Cytoplasmic. Residues 187-212 (RSLTNLINGESLLTSVLSLVIYSGVV) traverse the membrane as a helical segment. Residues 213–225 (HIRFKSKSVNHTL) lie on the Extracellular side of the membrane. The chain crosses the membrane as a helical span at residues 226–257 (AHKVMSTAWSYIVESFITGIVFTKVIQLWMAT). Over 258 to 261 (IFGD) the chain is Cytoplasmic. The helical transmembrane segment at 262-283 (DVNHITLIFSVLYLIFYVCELV) threads the bilayer. Residues 284–286 (GMS) lie on the Extracellular side of the membrane. Residues 287 to 300 (GIFTLATIGLFLNS) traverse the membrane as a helical segment. The Cytoplasmic segment spans residues 301-307 (TSFKPGV). Residues 308–339 (EAFLLEFWNCLSFIGFLMVFTFIGLLIPAHTY) form a helical membrane-spanning segment. At 340–344 (LHISF) the chain is on the extracellular side. Residues 345–374 (SDVYYSLNIYFTLIVLRLLVFLLMSPILSR) traverse the membrane as a helical segment. Residues 345 to 446 (SDVYYSLNIY…FILPMAVTKL (102 aa)) are transport core domain. At 375-380 (LGHGFS) the chain is on the cytoplasmic side. A helical membrane pass occupies residues 381 to 411 (WRWAFIMVWSEMKGTPNINMALLLAYSDISL). At 412-415 (GSER) the chain is on the extracellular side. A helical membrane pass occupies residues 416–446 (ERSQILFHGVSVCVITLIVNRFILPMAVTKL). Over 447-632 (GLRDVTSTKY…ACHRIVFTNE (186 aa)) the chain is Cytoplasmic. Residues 618–698 (YMFLHACHRI…EFFSHTWLLF (81 aa)) form an ion transport-like region. The helical transmembrane segment at 633 to 653 (FEYTGYLVVLMSTYPMIICWI) threads the bilayer. The Extracellular segment spans residues 654–657 (SRLK). Residues 658-684 (DIYDNEIKCANYYFLAFYILEALLKVA) form a helical membrane-spanning segment. Over 685 to 691 (AMRKEFF) the chain is Cytoplasmic. A helical transmembrane segment spans residues 692–716 (SHTWLLFELGITLVGVLDIILIETD). The Extracellular segment spans residues 717–724 (SISYNFDL). The helical transmembrane segment at 725-751 (TETVVFMNVIRLLRILRILKLVTPKLL) threads the bilayer. Topologically, residues 752-1175 (QIIDKRMSQQ…EELIEENINI (424 aa)) are cytoplasmic. The segment covering 1137-1146 (MKPDSERESF) has biased composition (basic and acidic residues). The tract at residues 1137–1175 (MKPDSERESFETLDETSEEDNGKKENQENEELIEENINI) is disordered. Residues 1164–1175 (ENEELIEENINI) are compositionally biased toward acidic residues.

This sequence belongs to the monovalent cation:proton antiporter 1 (CPA1) transporter (TC 2.A.36) family. Interacts with soluble adenylyl cyclase (sAC). Testis-specific. Specifically present in the principal piece of sperm tail (at protein level).

Its subcellular location is the cell projection. It localises to the cilium. The protein localises to the flagellum membrane. Sperm-specific solute carrier involved in intracellular pH regulation of spermatozoa. Required for sperm motility and fertility. Involved in sperm cell hyperactivation, a step needed for sperm motility which is essential late in the preparation of sperm for fertilization. Required for the expression and bicarbonate regulation of the soluble adenylyl cyclase (sAC). The protein is Solute carrier family 9 member C1 (Slc9c1) of Mus musculus (Mouse).